Reading from the N-terminus, the 57-residue chain is Large ribosomal subunit protein bL32 (57 aa).

The protein belongs to the bacterial ribosomal protein bL32 family.

The chain is Large ribosomal subunit protein bL32 from Halothermothrix orenii (strain H 168 / OCM 544 / DSM 9562).